The chain runs to 335 residues: Transmembrane protein 120B-A (335 aa).

Residues 1 to 40 adopt a coiled-coil conformation; sequence MSLQKCQEEWSEIEKEFQQLQETHKVYKQKLEELNSLQNL. 6 helical membrane passes run 100 to 122, 130 to 150, 157 to 177, 193 to 213, 268 to 288, and 300 to 320; these read GLYL…AKFA, FKLY…FVLN, VFNF…SILI, VSTF…YQIF, FLLP…ITLF, and QVFV…LTTL.

The protein belongs to the TMEM120 family.

It localises to the nucleus inner membrane. In terms of biological role, necessary for efficient adipogenesis. Does not show ion channel activity. This is Transmembrane protein 120B-A (tmem120b-a) from Xenopus laevis (African clawed frog).